The following is a 382-amino-acid chain: MHPDQIRQLRLQESSNTHPNLAILFIFIALAAVIVLLICLLSVILLLRYTRHGRILLKNTNPGELDDEALENEHIDEEGFSLLDDMGKERYLQAREFELNSMKSNVNTDAKLLDFLQVQEKGVLAWHFIPNQEYNCYVKNKTELSFLGNEECCMQTNLPLQRINEVYYFEVKLLDVPIDTLVSIGLATKPYPPFRLPGWNFWSTAYVSDGTRRSNSPFTGKPYSSFYQQGDVIGVGYKPKCNRIFFTRNGRRCAELPCTYRNLYPTVGAIGPCTLHVNLGQAGYVFIEANIKKWRLAPAVGSLAPPPSYSTSQPTISWDAASESSAGTTTQGDTNRPDKSKNRSPPINFDGTSYDAAGNVFSPSSSNNQAYQMHSMPATDEV.

The chain crosses the membrane as a helical span at residues 21 to 41 (LAILFIFIALAAVIVLLICLL). The B30.2/SPRY domain maps to 79–284 (GFSLLDDMGK…LHVNLGQAGY (206 aa)). Residues 304-382 (APPPSYSTSQ…MHSMPATDEV (79 aa)) are disordered. 2 stretches are compositionally biased toward polar residues: residues 309–334 (YSTS…QGDT) and 361–372 (FSPSSSNNQAYQ).

It is found in the cytoplasm. The protein resides in the membrane. The polypeptide is SPRY domain-containing protein C285.10c (Schizosaccharomyces pombe (strain 972 / ATCC 24843) (Fission yeast)).